The primary structure comprises 490 residues: GTPase Der (490 aa).

EngA-type G domains are found at residues 3–166 and 203–376; these read PVVA…VDEI and IKLA…DSST. Residues 9-16, 56-60, 118-121, 209-216, 256-260, and 321-324 each bind GTP; these read GRPNVGKS, DTGGI, NKTD, DTAGV, and NKWD. The KH-like domain maps to 377 to 461; the sequence is RRQSTAMLTR…PIRIQFKEGE (85 aa).

Belongs to the TRAFAC class TrmE-Era-EngA-EngB-Septin-like GTPase superfamily. EngA (Der) GTPase family. As to quaternary structure, associates with the 50S ribosomal subunit.

In terms of biological role, GTPase that plays an essential role in the late steps of ribosome biogenesis. The protein is GTPase Der of Enterobacter sp. (strain 638).